Consider the following 118-residue polypeptide: uncharacterized protein (118 aa).

It belongs to the transposase IS3/IS150/IS904 family.

This is an uncharacterized protein from Haemophilus influenzae (strain ATCC 51907 / DSM 11121 / KW20 / Rd).